A 165-amino-acid chain; its full sequence is Transcription factor TCP16 (165 aa).

The span at 1–11 (MDSKNGINNSQ) shows a compositional bias: polar residues. Disordered stretches follow at residues 1 to 21 (MDSK…KDRH) and 146 to 165 (GNAT…TTTV). Positions 12–21 (KARRTPKDRH) are enriched in basic residues. The TCP domain occupies 17–71 (PKDRHLKIGGRDRRIRIPPSVAPQLFRLTKELGFKTDGETVSWLLQNAEPAIFAA). A compositionally biased stretch (low complexity) spans 148–165 (ATASDTTSAATTTATTTV).

Mostly in anther in young buds.

It is found in the nucleus. Its function is as follows. Required during early processes in pollen development. The polypeptide is Transcription factor TCP16 (TCP16) (Arabidopsis thaliana (Mouse-ear cress)).